Reading from the N-terminus, the 351-residue chain is Synaptonemal complex central element protein 1 (351 aa).

A compositionally biased stretch (polar residues) spans 1–10; that stretch reads MAGRSLTSKA. 2 disordered regions span residues 1–31 and 267–351; these read MAGR…TSSQ and KCQQ…KELF. Positions 52 to 290 form a coiled coil; that stretch reads RVEVLINRIN…ELEKHGMQVP (239 aa).

It belongs to the SYCE family. As to quaternary structure, homodimer. Found in a complex with SYCP1 and SYCE2. Interacts with SYCP1, SYCE2 and SYCE3. Interacts with SIX6OS1.

It localises to the nucleus. Its subcellular location is the chromosome. Major component of the transverse central element of synaptonemal complexes (SCS), formed between homologous chromosomes during meiotic prophase. Requires SYCP1 in order to be incorporated into the central element. May have a role in the synaptonemal complex assembly, stabilization and recombination. In Homo sapiens (Human), this protein is Synaptonemal complex central element protein 1 (SYCE1).